Consider the following 293-residue polypeptide: Ribosomal protein L11 methyltransferase (293 aa).

S-adenosyl-L-methionine-binding residues include T145, G166, D188, and N230.

Belongs to the methyltransferase superfamily. PrmA family.

Its subcellular location is the cytoplasm. The catalysed reaction is L-lysyl-[protein] + 3 S-adenosyl-L-methionine = N(6),N(6),N(6)-trimethyl-L-lysyl-[protein] + 3 S-adenosyl-L-homocysteine + 3 H(+). In terms of biological role, methylates ribosomal protein L11. This is Ribosomal protein L11 methyltransferase from Salmonella arizonae (strain ATCC BAA-731 / CDC346-86 / RSK2980).